The primary structure comprises 236 residues: 2,3,4,5-tetrahydropyridine-2,6-dicarboxylate N-acetyltransferase (236 aa).

Belongs to the transferase hexapeptide repeat family. DapH subfamily.

The catalysed reaction is (S)-2,3,4,5-tetrahydrodipicolinate + acetyl-CoA + H2O = L-2-acetamido-6-oxoheptanedioate + CoA. It functions in the pathway amino-acid biosynthesis; L-lysine biosynthesis via DAP pathway; LL-2,6-diaminopimelate from (S)-tetrahydrodipicolinate (acetylase route): step 1/3. Catalyzes the transfer of an acetyl group from acetyl-CoA to tetrahydrodipicolinate. The sequence is that of 2,3,4,5-tetrahydropyridine-2,6-dicarboxylate N-acetyltransferase from Bacillus subtilis (strain 168).